Here is a 340-residue protein sequence, read N- to C-terminus: Guanine nucleotide-binding protein G(I)/G(S)/G(T) subunit beta-1 (340 aa).

Residue Ser2 is modified to N-acetylserine. Ser2 is subject to Phosphoserine. 7 WD repeats span residues 46 to 94, 95 to 140, 141 to 181, 182 to 223, 224 to 267, 268 to 309, and 310 to 340; these read RTRR…HAIP, LRSS…RELA, GHTG…TTFT, GHTG…QTFT, GHES…YSHD, NIIC…GVLA, and GHDD…KIWN. His266 bears the Phosphohistidine mark.

It belongs to the WD repeat G protein beta family. As to quaternary structure, g proteins are composed of 3 units, alpha, beta and gamma. The heterodimer formed by GNB1 and GNG2 interacts with ARHGEF5. The heterodimer formed by GNB1 and GNG2 interacts with GRK2. Forms a complex with GNAO1 and GNG3. Interacts with ARHGEF18 and RASD2. Forms complexes with TAS2R14 and G-proteins; these complexes play a role in the perception of bitterness. Component of the TAS2R14-GNAI1 complex, consisting of TAS2R14, GNAI1, GNB1 and GNG2. Component of the TAS2R14-GNAT3 complex, consisting of TAS2R14, GNAT3, GNB1 and GNG2. Component of the TAS2R14-GNAS2 complex, consisting of TAS2R14, GNAS2, GNB1 and GNG2. Post-translationally, phosphorylation at His-266 by NDKB contributes to G protein activation by increasing the high energetic phosphate transfer onto GDP.

In terms of biological role, guanine nucleotide-binding proteins (G proteins) are involved as a modulator or transducer in various transmembrane signaling systems. The beta and gamma chains are required for the GTPase activity, for replacement of GDP by GTP, and for G protein-effector interaction. The chain is Guanine nucleotide-binding protein G(I)/G(S)/G(T) subunit beta-1 (GNB1) from Pongo abelii (Sumatran orangutan).